Reading from the N-terminus, the 565-residue chain is 13S globulin seed storage protein 1 (565 aa).

The first 20 residues, 1–20 (MSTKLILSFSLCLMVLSCSA), serve as a signal peptide directing secretion. 2 cysteine pairs are disulfide-bonded: Cys-44–Cys-77 and Cys-120–Cys-384. One can recognise a Cupin type-1 1 domain in the interval 49 to 331 (LTASEPSRRV…FRNVDQETIS (283 aa)). 3 disordered regions span residues 126 to 224 (SESE…IRDG), 271 to 301 (GQSK…SDDD), and 356 to 376 (EYEE…SGRS). Composition is skewed to basic and acidic residues over residues 137 to 224 (RDQR…IRDG), 275 to 297 (QSRE…QSRE), and 356 to 370 (EYEE…DRKR). Residues 390-539 (QNVNRPSRAD…SYDISTKEAF (150 aa)) enclose the Cupin type-1 2 domain.

The protein belongs to the 11S seed storage protein (globulins) family. In terms of assembly, hexamer; each subunit is composed of an acidic and a basic chain derived from a single precursor and linked by a disulfide bond. Expressed only in immature seeds.

In terms of biological role, seed storage protein. This is 13S globulin seed storage protein 1 (FA02) from Fagopyrum esculentum (Common buckwheat).